Consider the following 219-residue polypeptide: MTDHRTRFLQLALDADALRFGEFTLKSGRLSPYFFNAGRFDSGAKTAQLAQCYADAIDAAGVEFDLLFGPAYKGIPLATALACAYAGRGRDLPLAFNRKEAKDHGEGGTLIGAPLQGRKVLIVDDVITAGTAIREALGIIRAAGGTPSGIVVALDRQEIASEQDRRSAAQAVAAEAGIPVIAVANLADLLAFAAGNADLVGFREPLLAYRGRYGTDTTG.

Lys-26 lines the 5-phospho-alpha-D-ribose 1-diphosphate pocket. 34–35 serves as a coordination point for orotate; sequence FF. Residues 72–73, Arg-98, Lys-99, Lys-102, His-104, and 124–132 contribute to the 5-phospho-alpha-D-ribose 1-diphosphate site; these read YK and DDVITAGTA. Residues Thr-128 and Arg-156 each coordinate orotate.

It belongs to the purine/pyrimidine phosphoribosyltransferase family. PyrE subfamily. As to quaternary structure, homodimer. Requires Mg(2+) as cofactor.

It carries out the reaction orotidine 5'-phosphate + diphosphate = orotate + 5-phospho-alpha-D-ribose 1-diphosphate. It functions in the pathway pyrimidine metabolism; UMP biosynthesis via de novo pathway; UMP from orotate: step 1/2. Functionally, catalyzes the transfer of a ribosyl phosphate group from 5-phosphoribose 1-diphosphate to orotate, leading to the formation of orotidine monophosphate (OMP). The chain is Orotate phosphoribosyltransferase from Xanthomonas campestris pv. campestris (strain 8004).